Here is a 265-residue protein sequence, read N- to C-terminus: Thiazole synthase (265 aa).

Lys-107 serves as the catalytic Schiff-base intermediate with DXP. Residues Gly-168, 194-195 (AG), and 216-217 (NT) each bind 1-deoxy-D-xylulose 5-phosphate.

Belongs to the ThiG family. As to quaternary structure, homotetramer. Forms heterodimers with either ThiH or ThiS.

It localises to the cytoplasm. It carries out the reaction [ThiS sulfur-carrier protein]-C-terminal-Gly-aminoethanethioate + 2-iminoacetate + 1-deoxy-D-xylulose 5-phosphate = [ThiS sulfur-carrier protein]-C-terminal Gly-Gly + 2-[(2R,5Z)-2-carboxy-4-methylthiazol-5(2H)-ylidene]ethyl phosphate + 2 H2O + H(+). It functions in the pathway cofactor biosynthesis; thiamine diphosphate biosynthesis. Its function is as follows. Catalyzes the rearrangement of 1-deoxy-D-xylulose 5-phosphate (DXP) to produce the thiazole phosphate moiety of thiamine. Sulfur is provided by the thiocarboxylate moiety of the carrier protein ThiS. In vitro, sulfur can be provided by H(2)S. This Pseudomonas aeruginosa (strain LESB58) protein is Thiazole synthase.